The primary structure comprises 307 residues: Aspartate carbamoyltransferase catalytic subunit (307 aa).

2 residues coordinate carbamoyl phosphate: arginine 56 and threonine 57. Lysine 84 is an L-aspartate binding site. The carbamoyl phosphate site is built by arginine 106, histidine 136, and glutamine 139. L-aspartate is bound by residues arginine 169 and arginine 221. Carbamoyl phosphate is bound by residues alanine 262 and proline 263.

Belongs to the aspartate/ornithine carbamoyltransferase superfamily. ATCase family. In terms of assembly, heterododecamer (2C3:3R2) of six catalytic PyrB chains organized as two trimers (C3), and six regulatory PyrI chains organized as three dimers (R2).

It catalyses the reaction carbamoyl phosphate + L-aspartate = N-carbamoyl-L-aspartate + phosphate + H(+). The protein operates within pyrimidine metabolism; UMP biosynthesis via de novo pathway; (S)-dihydroorotate from bicarbonate: step 2/3. Functionally, catalyzes the condensation of carbamoyl phosphate and aspartate to form carbamoyl aspartate and inorganic phosphate, the committed step in the de novo pyrimidine nucleotide biosynthesis pathway. In Streptococcus pneumoniae serotype 2 (strain D39 / NCTC 7466), this protein is Aspartate carbamoyltransferase catalytic subunit.